The primary structure comprises 868 residues: MSGRDNRGAGGGGGGHQPLSSAMGKLKEKLTRAGDDQGYHRVESNLSTSNTATSLDTILPEDPFLFPQAAPQRHPLPRPQQQQQQQRQQLRLLEDEPPLSFRPLLEDDDINEPPTQPFQQQQQRTPLRASGSLELTPLPPPPTSQEIREHRDRQQRSVPVPVEDLQRSKQSLKGSRVSFEKNNASSKPPAQAESSDEDSFEDKRIGFQQQKATSVDHKGILKDLKHILANDNRRQFQAKKHVSLDVKGTRFLQDLLKESSSEEEFHKTRREFQGRKHQSLDPRVTFKLDKVLQGSSTDSDEEGDDPEHKRLIHRPKDITKPLIIDLKDLESESDEDFHTSRQHFQQQRSISTDSRKSRRPYEMDEMGNKRGENIRHAVPFVRQITEDGKPKLEVYRPTTNPIYIWTQVLAALSVSLGSLVVGFVSAYTSPALVSMTNRNMTSFEVTPQAASWVGGIMPLAGLAGGIAGGPFIEYLGRRNTILATAIPFIVSSLLIACAVNVAMVLAGRFLAGFCVGIASLSLPVYLGETVQPEVRGTLGLLPTAFGNIGILLCFVAGTYMDWSMLAFLGAALPVPFLILMFLIPETPRWFVSRGREEKARKALSWLRGKEADVEPELKGLMRSQADADRQATQNKMMELLKRNNLKPLSISLGLMFFQQLSGINAVIFYTVSIFKDAGSTIDGNLCTIIVGIVNFMATFIATLLIDRAGRKILLYVSNIAMIITLFVLGGFFYCKSHGQDVSQLGWLPLSCFVIYILGFSLGFGPIPWLMMGEILPSKIRGSAASVATAFNWSCTFVVTKTFQDMIDFMGAHGAFWLFGSICFIGLFFVILYVPETQGKTLEDIERKMMGRVRRMSSVANMKPLAFNM.

Disordered stretches follow at residues 1-213 and 257-314; these read MSGR…QKAT and KESS…LIHR. The Cytoplasmic portion of the chain corresponds to 1 to 403; that stretch reads MSGRDNRGAG…VYRPTTNPIY (403 aa). A compositionally biased stretch (basic and acidic residues) spans 25–43; that stretch reads KLKEKLTRAGDDQGYHRVE. Composition is skewed to low complexity over residues 44–57, 79–91, and 117–126; these read SNLS…SLDT, PQQQ…QQLR, and PFQQQQQRTP. 2 stretches are compositionally biased toward basic and acidic residues: residues 146–155 and 257–290; these read EIREHRDRQQ and KESS…KLDK. Residues Ser259, Ser260, Ser261, Ser331, and Ser333 each carry the phosphoserine modification. Residues 335–367 form a disordered region; sequence EDFHTSRQHFQQQRSISTDSRKSRRPYEMDEMG. The span at 342–352 shows a compositional bias: polar residues; sequence QHFQQQRSIST. Residues 353 to 367 are compositionally biased toward basic and acidic residues; that stretch reads DSRKSRRPYEMDEMG. A helical transmembrane segment spans residues 404–424; the sequence is IWTQVLAALSVSLGSLVVGFV. At 425–451 the chain is on the extracellular side; it reads SAYTSPALVSMTNRNMTSFEVTPQAAS. N-linked (GlcNAc...) asparagine glycosylation is present at Asn439. Residues 452–472 traverse the membrane as a helical segment; that stretch reads WVGGIMPLAGLAGGIAGGPFI. Residues 473–484 are Cytoplasmic-facing; it reads EYLGRRNTILAT. The helical transmembrane segment at 485 to 505 threads the bilayer; it reads AIPFIVSSLLIACAVNVAMVL. Residues 506–508 are Extracellular-facing; sequence AGR. Residues 509–529 traverse the membrane as a helical segment; the sequence is FLAGFCVGIASLSLPVYLGET. Topologically, residues 530–535 are cytoplasmic; the sequence is VQPEVR. The chain crosses the membrane as a helical span at residues 536-556; the sequence is GTLGLLPTAFGNIGILLCFVA. Over 557 to 563 the chain is Extracellular; that stretch reads GTYMDWS. The helical transmembrane segment at 564–584 threads the bilayer; the sequence is MLAFLGAALPVPFLILMFLIP. Residues 585-653 are Cytoplasmic-facing; it reads ETPRWFVSRG…NLKPLSISLG (69 aa). Residues 654–674 form a helical membrane-spanning segment; it reads LMFFQQLSGINAVIFYTVSIF. Topologically, residues 675–684 are extracellular; that stretch reads KDAGSTIDGN. The chain crosses the membrane as a helical span at residues 685–705; the sequence is LCTIIVGIVNFMATFIATLLI. Over 706–711 the chain is Cytoplasmic; the sequence is DRAGRK. Residues 712–732 form a helical membrane-spanning segment; the sequence is ILLYVSNIAMIITLFVLGGFF. The Extracellular segment spans residues 733 to 751; sequence YCKSHGQDVSQLGWLPLSC. The chain crosses the membrane as a helical span at residues 752 to 772; the sequence is FVIYILGFSLGFGPIPWLMMG. Residues 773–778 are Cytoplasmic-facing; sequence EILPSK. A helical transmembrane segment spans residues 779–799; sequence IRGSAASVATAFNWSCTFVVT. Over 800–812 the chain is Extracellular; the sequence is KTFQDMIDFMGAH. A helical transmembrane segment spans residues 813 to 833; the sequence is GAFWLFGSICFIGLFFVILYV. Topologically, residues 834-868 are cytoplasmic; the sequence is PETQGKTLEDIERKMMGRVRRMSSVANMKPLAFNM. Phosphoserine is present on residues Ser856 and Ser857.

Belongs to the major facilitator superfamily. Sugar transporter (TC 2.A.1.1) family. Trehalose transporter subfamily.

It is found in the cell membrane. Functionally, low-capacity facilitative transporter for trehalose. Does not transport maltose, sucrose or lactose. Mediates the bidirectional transfer of trehalose. Responsible for the transport of trehalose synthesized in the fat body and the incorporation of trehalose into other tissues that require a carbon source, thereby regulating trehalose levels in the hemolymph. This Drosophila pseudoobscura pseudoobscura (Fruit fly) protein is Facilitated trehalose transporter Tret1.